The sequence spans 189 residues: Peptidyl-tRNA hydrolase (189 aa).

A tRNA-binding site is contributed by Tyr15. The active-site Proton acceptor is His20. TRNA-binding residues include Phe66, Asn68, and Asn114.

Belongs to the PTH family. In terms of assembly, monomer.

It is found in the cytoplasm. The enzyme catalyses an N-acyl-L-alpha-aminoacyl-tRNA + H2O = an N-acyl-L-amino acid + a tRNA + H(+). Hydrolyzes ribosome-free peptidyl-tRNAs (with 1 or more amino acids incorporated), which drop off the ribosome during protein synthesis, or as a result of ribosome stalling. Its function is as follows. Catalyzes the release of premature peptidyl moieties from peptidyl-tRNA molecules trapped in stalled 50S ribosomal subunits, and thus maintains levels of free tRNAs and 50S ribosomes. The protein is Peptidyl-tRNA hydrolase of Streptococcus pyogenes serotype M1.